Reading from the N-terminus, the 459-residue chain is Flavin-containing monooxygenase FMO GS-OX1 (459 aa).

Residue 17 to 22 (GAGAAG) coordinates FAD. NADP(+) is bound at residue 211–216 (GNYASG).

Belongs to the FMO family. FAD serves as cofactor. In terms of tissue distribution, mainly expressed in leaves. Low levels in flowers and seeds.

It carries out the reaction a (Z)-omega-(methylsulfanyl)-N-sulfo-alkylhydroximate S-glucoside + NADPH + O2 + H(+) = a (Z)-omega-(methylsulfinyl)-alkyl-glucosinolate + NADP(+) + H2O. In terms of biological role, catalyzes the conversion of methylthioalkyl glucosinolates into methylsulfinylalkyl glucosinolates. Able to S-oxygenate both desulfo- and intact 4-methylthiobutyl glucosinolates, but no activity with methionine, dihomomethionine or 5-methylthiopentaldoxime. In Arabidopsis thaliana (Mouse-ear cress), this protein is Flavin-containing monooxygenase FMO GS-OX1 (FMOGS-OX1).